A 2472-amino-acid polypeptide reads, in one-letter code: Spectrin alpha chain, non-erythrocytic 1 (2472 aa).

The residue at position 1 (M1) is an N-acetylmethionine. Spectrin repeat units follow at residues 45-146 (RFQF…IKLL), 150-251 (KLVQ…QGKL), 256-358 (EVQR…ARLN), 361-465 (YRLQ…QYEQ), 468-570 (DLQL…AQLA), 574-676 (HLQQ…KLRE), 679-781 (QQQQ…QKLA), 785-888 (RLQQ…DLED), and 891-969 (QAQQ…ETGK). S587 is subject to Phosphoserine. The residue at position 637 (K637) is an N6-acetyllysine. At K803 the chain carries N6-acetyllysine. Residues S924, S982, S999, S1029, S1031, and S1041 each carry the phosphoserine modification. The region spanning 967–1026 (TGKELVLALYDYQEKSPREVTMKKGDILTLLNSTNKDWWKVEVNDRQGFVPAAYVKKLDP) is the SH3 domain. A Spectrin 10 repeat occupies 1096 to 1166 (LFREANELQQ…LESEGLMAEE (71 aa)). At Y1176 the chain carries Phosphotyrosine. S1190, S1207, S1217, S1291, S1306, S1323, and S1338 each carry phosphoserine. Residues 1233–1336 (HEVQRFHRDA…RADQRKAKLG (104 aa)) form a Spectrin 11 repeat. Spectrin repeat units follow at residues 1339 to 1442 (HDLQ…MMLD) and 1446 to 1549 (ELQL…KLGE). K1519 carries the N6-acetyllysine modification. S1550, S1557, S1578, S1615, and S1647 each carry phosphoserine. Spectrin repeat units lie at residues 1552 to 1656 (TLQQ…KLKE), 1659 to 1762 (KQQN…KLNE), 1764 to 1868 (HRLH…RLEE), 1871 to 1974 (EYQQ…KLDE), 1978 to 2081 (FLQF…KLLE), 2092 to 2194 (LFLT…LELQ), and 2206 to 2310 (LRQE…NLEQ). T2020 is modified (phosphothreonine). Position 2052 is an N6-acetyllysine (K2052). 3 EF-hand domains span residues 2323–2358 (EALKEFSMMFKHFDKDKSGRLNHQEFKSCLRSLGYD), 2366–2401 (EPDPEFEAILDTVDPNRDGHVSLQEYMAFMISRETE), and 2404–2439 (KSSEEIESAFRALSSEGKPYVTKEELYQNLTREQAD). D2336, D2338, S2340, R2342, E2347, D2379, N2381, D2383, H2385, and E2390 together coordinate Ca(2+). K2421 carries the post-translational modification N6-acetyllysine.

The protein belongs to the spectrin family. As to quaternary structure, like erythrocyte spectrin, the spectrin-like proteins are capable of forming dimers which can further associate to tetramers. Interacts (via C-terminal spectrin repeats) with TRPC4. Interacts with CALM and EMD. Interacts with isoform 1 of ACP1. Identified in a complex with ACTN4, CASK, IQGAP1, MAGI2, NPHS1 and SPTBN1. Interacts with SHANK3 (via ANK repeats). Interacts with CLN3; this interaction regulates the fodrin localization at the plasma membrane. Phosphorylation of Tyr-1176 decreases sensitivity to cleavage by calpain in vitro.

It localises to the cytoplasm. It is found in the cytoskeleton. The protein resides in the cell cortex. Its function is as follows. Fodrin, which seems to be involved in secretion, interacts with calmodulin in a calcium-dependent manner and is thus candidate for the calcium-dependent movement of the cytoskeleton at the membrane. This Homo sapiens (Human) protein is Spectrin alpha chain, non-erythrocytic 1 (SPTAN1).